Reading from the N-terminus, the 185-residue chain is A-type ATP synthase subunit E (185 aa).

This sequence belongs to the V-ATPase E subunit family. Has multiple subunits with at least A(3), B(3), C, D, E, F, H, I and proteolipid K(x).

The protein localises to the cell membrane. Component of the A-type ATP synthase that produces ATP from ADP in the presence of a proton gradient across the membrane. In Thermoplasma volcanium (strain ATCC 51530 / DSM 4299 / JCM 9571 / NBRC 15438 / GSS1), this protein is A-type ATP synthase subunit E.